A 367-amino-acid chain; its full sequence is Cellular tumor antigen p53 (367 aa).

A transcription activation (acidic) region spans residues 1–47; it reads MEEENISLPLSQDTFQDLWDNVSAPPISTIQTAALENEAWPAERQMN. A DNA-binding region spans residues 86 to 273; it reads DYPGEYGFKL…KTEETNSTKM (188 aa). The Zn(2+) site is built by cysteine 160, histidine 163, cysteine 219, and cysteine 223. The segment at 254–261 is interaction with DNA; sequence RVCACPGR. Over residues 262–279 the composition is skewed to basic and acidic residues; it reads DRKTEETNSTKMQNDAKD. Disordered stretches follow at residues 262–306 and 332–367; these read DRKT…AEED and DLLE…SDSD. Positions 282 to 300 match the Bipartite nuclear localization signal motif; that stretch reads KRKSVPTPDSTTIKKSKTA. A compositionally biased stretch (low complexity) spans 291 to 302; it reads STTIKKSKTASS. The oligomerization stretch occupies residues 308–337; sequence NEVYTLQIRGRKRYEMLKKINDGLDLLENK. Positions 322–333 match the Nuclear export signal motif; the sequence is EMLKKINDGLDL. Positions 342–363 are basic (repression of DNA-binding); sequence ATHRPDGPIPPSGKRLLHRGEK.

It belongs to the p53 family. In terms of assembly, binds DNA as a homotetramer. Requires Zn(2+) as cofactor.

Its subcellular location is the cytoplasm. The protein resides in the nucleus. Its function is as follows. Multifunctional transcription factor that induces cell cycle arrest, DNA repair or apoptosis upon binding to its target DNA sequence. Acts as a tumor suppressor in many tumor types; induces growth arrest or apoptosis depending on the physiological circumstances and cell type. Negatively regulates cell division by controlling expression of a set of genes required for this process. One of the activated genes is an inhibitor of cyclin-dependent kinases. Apoptosis induction seems to be mediated either by stimulation of BAX and FAS antigen expression, or by repression of Bcl-2 expression. This chain is Cellular tumor antigen p53 (tp53), found in Tetraodon miurus (Congo puffer).